Reading from the N-terminus, the 471-residue chain is Putative multidrug resistance protein MdtD (471 aa).

Residues 1–12 are Periplasmic-facing; the sequence is MTDLPDSTRWQL. The chain crosses the membrane as a helical span at residues 13–33; it reads WIVAFGFFMQSLDTTIVNTAI. Over 34–48 the chain is Cytoplasmic; that stretch reads PSMAQSLGESPLHMH. The helical transmembrane segment at 49-69 threads the bilayer; that stretch reads MVIVSYVLTVAVMLPASGWLA. Topologically, residues 70–76 are periplasmic; the sequence is DKVGVRN. The helical transmembrane segment at 77–97 threads the bilayer; it reads IFFTAIVLFTLGSLFCALSGT. Residues 98–101 are Cytoplasmic-facing; it reads LNEL. A helical membrane pass occupies residues 102–124; sequence LLARALQGVGGAMMVPVGRLTVM. The Periplasmic segment spans residues 125-137; that stretch reads KIVPREQYMAAMT. The helical transmembrane segment at 138–158 threads the bilayer; it reads FVTLPGQVGPLLGPALGGLLV. Over 159–164 the chain is Cytoplasmic; sequence EYASWH. Residues 165 to 185 traverse the membrane as a helical segment; that stretch reads WIFLINIPVGIIGAIATLMLM. At 186–196 the chain is on the periplasmic side; sequence PNYTMQTRRFD. The helical transmembrane segment at 197–217 threads the bilayer; the sequence is LSGFLLLAVGMAVLTLALDGS. The Cytoplasmic segment spans residues 218 to 224; it reads KGTGLSP. Residues 225–245 traverse the membrane as a helical segment; the sequence is LAIAGLVAVGVVALVLYLLHA. Topologically, residues 246 to 262 are periplasmic; sequence RNNNRALFSLKLFRTRT. The helical transmembrane segment at 263 to 283 threads the bilayer; sequence FSLGLAGSFAGRIGSGMLPFM. The Cytoplasmic portion of the chain corresponds to 284-285; sequence TP. A helical transmembrane segment spans residues 286–306; the sequence is VFLQIGLGFSPFHAGLMMIPM. The Periplasmic segment spans residues 307–341; sequence VLGSMGMKRIVVQVVNRFGYRRVLVATTLGLSLVT. The helical transmembrane segment at 342 to 362 threads the bilayer; it reads LLFMTTALLGWYYVLPFVLFL. Topologically, residues 363–395 are cytoplasmic; the sequence is QGMVNSTRFSSMNTLTLKDLPDNLASSGNSLLS. A helical membrane pass occupies residues 396 to 416; the sequence is MIMQLSMSIGVTIAGLLLGLF. Residues 417–430 lie on the Periplasmic side of the membrane; it reads GSQHVSVDSGTTQT. A helical transmembrane segment spans residues 431 to 451; the sequence is VFMYTWLSMAFIIALPAFIFA. Residues 452–471 lie on the Cytoplasmic side of the membrane; sequence RVPNDTHQNVAISRRKRSAQ.

The protein belongs to the major facilitator superfamily. TCR/Tet family.

Its subcellular location is the cell inner membrane. The sequence is that of Putative multidrug resistance protein MdtD from Shigella flexneri serotype 5b (strain 8401).